The sequence spans 889 residues: Oxysterol-binding protein-related protein 8 (889 aa).

Position 1 is an N-acetylmethionine (M1). The disordered stretch occupies residues 1-129 (MEAALADGEP…SLKVQKKNYR (129 aa)). Residues S14, S65, and S68 each carry the phosphoserine modification. The span at 62–71 (PSLSPASLHS) shows a compositional bias: polar residues. Basic and acidic residues-rich tracts occupy residues 73–88 (GFERGKEDISQNKDDS), 95–109 (SKSESKLYNGSEKDS), and 116–129 (TKKESLKVQKKNYR). Residues 148–265 (VIVMADWLKI…WMDALELALK (118 aa)) form the PH domain. 3 positions are modified to phosphoserine: S314, S328, and S342. Basic and acidic residues predominate over residues 321 to 336 (FKDQDLYSDKSDKEND). The interval 321–374 (FKDQDLYSDKSDKENDPEHDESDNEVLGKSEESDTDTSERQDDSYIDPEPVEPL) is disordered. The span at 346–363 (VLGKSEESDTDTSERQDD) shows a compositional bias: basic and acidic residues. A 1,2-diacyl-sn-glycero-3-phospho-(1D-myo-inositol 4-phosphate) contacts are provided by residues 420–425 (LSRVVL), 482–485 (KPYN), and 514–515 (HH). Residues 420–425 (LSRVVL) and N485 contribute to the a 1,2-diacyl-sn-glycero-3-phospho-L-serine site. S540 contacts a 1,2-diacyl-sn-glycero-3-phospho-L-serine. A 1,2-diacyl-sn-glycero-3-phospho-(1D-myo-inositol 4-phosphate) is bound by residues K706, E710, and R714. Residues 772 to 823 (HRTPMVSVPKMKHKPTRQQKKVVKGYSSPEPDIQDSSGSEAQSVKPSTRRKK) are disordered. Basic residues predominate over residues 781–794 (KMKHKPTRQQKKVV). Residues 805-817 (QDSSGSEAQSVKP) show a composition bias toward polar residues. Phosphoserine occurs at positions 807, 808, 810, and 814. A helical transmembrane segment spans residues 871 to 888 (YFVIFLLILLQVIINFIF).

It belongs to the OSBP family. As to quaternary structure, interacts with SPAG5. Interacts with NUP62. Widely expressed. Most abundant in liver, spleen, kidney, brain and adipose tissue.

It localises to the endoplasmic reticulum membrane. The protein localises to the nucleus membrane. Its function is as follows. Lipid transporter involved in lipid countertransport between the endoplasmic reticulum and the plasma membrane: specifically exchanges phosphatidylserine with phosphatidylinositol 4-phosphate (PI4P), delivering phosphatidylserine to the plasma membrane in exchange for PI4P, which is degraded by the SAC1/SACM1L phosphatase in the endoplasmic reticulum. Binds phosphatidylserine and PI4P in a mutually exclusive manner. Binds oxysterol, 25-hydroxycholesterol and cholesterol. This chain is Oxysterol-binding protein-related protein 8, found in Mus musculus (Mouse).